A 483-amino-acid polypeptide reads, in one-letter code: Protein P55 (483 aa).

The chain crosses the membrane as a helical span at residues 342–359; it reads LTPVMALIIILVYYSIYG.

The protein localises to the host membrane. This is Protein P55 from Vitis vinifera (Grape).